The sequence spans 344 residues: 4-hydroxy-2-oxovalerate aldolase (344 aa).

In terms of domain architecture, Pyruvate carboxyltransferase spans 8-260 (VTLHDMSLRD…NHGIDLYKIM (253 aa)). 16 to 17 (RD) provides a ligand contact to substrate. Mn(2+) is bound at residue aspartate 17. The active-site Proton acceptor is the histidine 20. Substrate is bound by residues serine 170 and histidine 199. Mn(2+) contacts are provided by histidine 199 and histidine 201. Tyrosine 290 lines the substrate pocket.

Belongs to the 4-hydroxy-2-oxovalerate aldolase family.

The catalysed reaction is (S)-4-hydroxy-2-oxopentanoate = acetaldehyde + pyruvate. This Pseudoalteromonas translucida (strain TAC 125) protein is 4-hydroxy-2-oxovalerate aldolase (mhpE).